The following is a 210-amino-acid chain: Type III pantothenate kinase (210 aa).

5–12 (DIGNTYLH) contributes to the ATP binding site. Substrate-binding positions include tyrosine 69 and 73–76 (GVDR). The active-site Proton acceptor is aspartate 75. Aspartate 90 is a binding site for K(+). Serine 93 contributes to the ATP binding site. Position 145 (threonine 145) interacts with substrate.

It belongs to the type III pantothenate kinase family. In terms of assembly, homodimer. It depends on NH4(+) as a cofactor. K(+) is required as a cofactor.

It localises to the cytoplasm. The catalysed reaction is (R)-pantothenate + ATP = (R)-4'-phosphopantothenate + ADP + H(+). It functions in the pathway cofactor biosynthesis; coenzyme A biosynthesis; CoA from (R)-pantothenate: step 1/5. Functionally, catalyzes the phosphorylation of pantothenate (Pan), the first step in CoA biosynthesis. The chain is Type III pantothenate kinase from Wolinella succinogenes (strain ATCC 29543 / DSM 1740 / CCUG 13145 / JCM 31913 / LMG 7466 / NCTC 11488 / FDC 602W) (Vibrio succinogenes).